A 152-amino-acid polypeptide reads, in one-letter code: Regulatory protein RecX (152 aa).

Belongs to the RecX family.

Its subcellular location is the cytoplasm. Modulates RecA activity. This Chromobacterium violaceum (strain ATCC 12472 / DSM 30191 / JCM 1249 / CCUG 213 / NBRC 12614 / NCIMB 9131 / NCTC 9757 / MK) protein is Regulatory protein RecX.